The sequence spans 134 residues: Small ribosomal subunit protein uS9c (134 aa).

This sequence belongs to the universal ribosomal protein uS9 family.

The protein localises to the plastid. It is found in the chloroplast. This Thalassiosira pseudonana (Marine diatom) protein is Small ribosomal subunit protein uS9c (rps9).